The following is a 269-amino-acid chain: NAD kinase (269 aa).

The active-site Proton acceptor is D45. NAD(+) contacts are provided by residues 45–46, 122–123, R149, D151, and A186; these read DG and NE.

The protein belongs to the NAD kinase family. The cofactor is a divalent metal cation.

The protein localises to the cytoplasm. It catalyses the reaction NAD(+) + ATP = ADP + NADP(+) + H(+). Functionally, involved in the regulation of the intracellular balance of NAD and NADP, and is a key enzyme in the biosynthesis of NADP. Catalyzes specifically the phosphorylation on 2'-hydroxyl of the adenosine moiety of NAD to yield NADP. The polypeptide is NAD kinase (Staphylococcus haemolyticus (strain JCSC1435)).